The primary structure comprises 288 residues: Proteasome subunit beta (288 aa).

Residues 1–60 constitute a propeptide, removed in mature form; by autocatalysis; sequence MESNADWGSRGGLPQAFLTPGISSFSEFLKGFAPEYLPSGRPLPGGLGSASAAGDIAPHG. Threonine 61 serves as the catalytic Nucleophile.

The protein belongs to the peptidase T1B family. In terms of assembly, the 20S proteasome core is composed of 14 alpha and 14 beta subunits that assemble into four stacked heptameric rings, resulting in a barrel-shaped structure. The two inner rings, each composed of seven catalytic beta subunits, are sandwiched by two outer rings, each composed of seven alpha subunits. The catalytic chamber with the active sites is on the inside of the barrel. Has a gated structure, the ends of the cylinder being occluded by the N-termini of the alpha-subunits. Is capped by the proteasome-associated ATPase, ARC.

It localises to the cytoplasm. The enzyme catalyses Cleavage of peptide bonds with very broad specificity.. It functions in the pathway protein degradation; proteasomal Pup-dependent pathway. With respect to regulation, the formation of the proteasomal ATPase ARC-20S proteasome complex, likely via the docking of the C-termini of ARC into the intersubunit pockets in the alpha-rings, may trigger opening of the gate for substrate entry. Interconversion between the open-gate and close-gate conformations leads to a dynamic regulation of the 20S proteasome proteolysis activity. Its function is as follows. Component of the proteasome core, a large protease complex with broad specificity involved in protein degradation. This Catenulispora acidiphila (strain DSM 44928 / JCM 14897 / NBRC 102108 / NRRL B-24433 / ID139908) protein is Proteasome subunit beta.